The following is a 164-amino-acid chain: Ribosome maturation factor RimM (164 aa).

Residues 90–161 (KGSYFIADLI…TVTIKPLEIW (72 aa)) enclose the PRC barrel domain.

Belongs to the RimM family. In terms of assembly, binds ribosomal protein uS19.

Its subcellular location is the cytoplasm. Its function is as follows. An accessory protein needed during the final step in the assembly of 30S ribosomal subunit, possibly for assembly of the head region. Essential for efficient processing of 16S rRNA. May be needed both before and after RbfA during the maturation of 16S rRNA. It has affinity for free ribosomal 30S subunits but not for 70S ribosomes. In Clostridium botulinum (strain ATCC 19397 / Type A), this protein is Ribosome maturation factor RimM.